A 315-amino-acid polypeptide reads, in one-letter code: Neurogenic differentiation factor 4 (315 aa).

The tract at residues 39 to 71 (ERGSIDGEEDDEEEEDGEKPKKRGPKKKKMTKA) is disordered. Residues 44-55 (DGEEDDEEEEDG) are compositionally biased toward acidic residues. The span at 58–70 (PKKRGPKKKKMTK) shows a compositional bias: basic residues. The 53-residue stretch at 78–130 (VRRVKANARERSRMHGLNDALENLRRVMPCYSKTQKLSKIETLRLARNYIWAL) folds into the bHLH domain. Ser89 is subject to Phosphoserine.

As to quaternary structure, efficient DNA binding requires dimerization with another bHLH protein. Forms a heterodimer with the bHLH protein hes2, and weakly interacts with hey1/hrt1. In terms of processing, serine or threonine phosphorylation within the basic region may regulate neurogenic activity. In terms of tissue distribution, first expressed weakly at stage 12 in primary neuronal precursors. At stages 18 and 21, strongly expressed in the cranial ganglions, with weaker expression remaining in the spinal cord. Later, strongly expressed at sites of neuronal differentiation, namely the eye, forebrain and cranial ganglions.

It is found in the nucleus. Probably acts as a transcriptional activator. Mediates neuronal differentiation. Required for the regulation of amacrine cell fate specification in the retina. This Xenopus laevis (African clawed frog) protein is Neurogenic differentiation factor 4 (neurod4).